The primary structure comprises 283 residues: Pantothenate synthetase (283 aa).

Residue 31 to 38 (MGALHEGH) participates in ATP binding. The Proton donor role is filled by His-38. Gln-62 serves as a coordination point for (R)-pantoate. Position 62 (Gln-62) interacts with beta-alanine. Position 148–151 (148–151 (GKKD)) interacts with ATP. Gln-154 is a (R)-pantoate binding site. ATP contacts are provided by residues Val-177 and 185–188 (RSSR).

The protein belongs to the pantothenate synthetase family. Homodimer.

It is found in the cytoplasm. It carries out the reaction (R)-pantoate + beta-alanine + ATP = (R)-pantothenate + AMP + diphosphate + H(+). The protein operates within cofactor biosynthesis; (R)-pantothenate biosynthesis; (R)-pantothenate from (R)-pantoate and beta-alanine: step 1/1. Its function is as follows. Catalyzes the condensation of pantoate with beta-alanine in an ATP-dependent reaction via a pantoyl-adenylate intermediate. The protein is Pantothenate synthetase of Staphylococcus haemolyticus (strain JCSC1435).